The chain runs to 540 residues: Glucose-6-phosphate isomerase (540 aa).

Residue Glu350 is the Proton donor of the active site. Catalysis depends on residues His381 and Lys503.

This sequence belongs to the GPI family.

The protein resides in the cytoplasm. It catalyses the reaction alpha-D-glucose 6-phosphate = beta-D-fructose 6-phosphate. It participates in carbohydrate biosynthesis; gluconeogenesis. It functions in the pathway carbohydrate degradation; glycolysis; D-glyceraldehyde 3-phosphate and glycerone phosphate from D-glucose: step 2/4. Functionally, catalyzes the reversible isomerization of glucose-6-phosphate to fructose-6-phosphate. The chain is Glucose-6-phosphate isomerase from Burkholderia pseudomallei (strain 1106a).